Reading from the N-terminus, the 518-residue chain is Sugar transport protein MST3 (518 aa).

At 1-18 (MAGGAVVSTGAGKDYPGK) the chain is on the cytoplasmic side. The chain crosses the membrane as a helical span at residues 19 to 39 (LTLFVFFTCVVAATGGLIFGY). Residues 40-80 (DIGISGGVTSMDPFLRKFFPEVYRKKQMADKNNQYCKYDNQ) lie on the Extracellular side of the membrane. A helical membrane pass occupies residues 81-101 (LLQTFTSSLYLAALVSSFFAA). Residues 102–117 (TVTRVLGRKWSMFAGG) are Cytoplasmic-facing. The chain crosses the membrane as a helical span at residues 118–138 (LTFLIGAALNGAAENVAMLIV). At 139 to 140 (GR) the chain is on the extracellular side. A helical transmembrane segment spans residues 141–161 (ILLGVGVGFANQSVPVYLSEM). The Cytoplasmic portion of the chain corresponds to 162-167 (APARLR). Residues 168 to 188 (GMLNIGFQLMITIGILAAELI) form a helical membrane-spanning segment. The Extracellular portion of the chain corresponds to 189–202 (NYGTAKIKAGWGWR). The chain crosses the membrane as a helical span at residues 203-223 (VSLALAAVPAAIITLGSLFLP). The Cytoplasmic portion of the chain corresponds to 224-290 (DTPNSLIDRG…YRAQLTMAIC (67 aa)). A helical transmembrane segment spans residues 291–311 (IPFFQQLTGINVIMFYAPVLF). The Extracellular portion of the chain corresponds to 312–322 (DTLGFKSDASL). A helical transmembrane segment spans residues 323–343 (MSAVITGLVNVFATLVSIFTV). Residues 344–351 (DRLGRRKL) are Cytoplasmic-facing. A helical transmembrane segment spans residues 352-372 (FLQGGAQMVVCQVVVGTLIAV). Residues 373 to 387 (KFGTSGIGDIPKGYA) lie on the Extracellular side of the membrane. Residues 388 to 408 (AVVVLFICMYVAGFAWSWGPL) form a helical membrane-spanning segment. The Cytoplasmic segment spans residues 409-427 (GWLVPSEIFPLEIRPAGQS). The chain crosses the membrane as a helical span at residues 428 to 448 (INVSVNMLFTFVIAQAFLTML). The Extracellular portion of the chain corresponds to 449–452 (CHMK). The chain crosses the membrane as a helical span at residues 453–473 (FGLFYFFAGWVVIMTVFIALF). Residues 474 to 518 (LPETKNVPIEEMVLVWKSHWFWRRFIGDHDVHVGANHVSNNKLQP) lie on the Cytoplasmic side of the membrane.

The protein belongs to the major facilitator superfamily. Sugar transporter (TC 2.A.1.1) family. In terms of tissue distribution, highly expressed in roots. Expressed in xylem and sclerenchyma cells of roots. Expressed at low levels in leaves.

It is found in the membrane. Its function is as follows. Mediates active uptake of hexoses by sugar:proton symport. Can transport glucose, xylose and 3-O-methylglucose. May be involved in the accumulation of monosaccharides required for cell wall synthesis during root development. This is Sugar transport protein MST3 from Oryza sativa subsp. japonica (Rice).